We begin with the raw amino-acid sequence, 198 residues long: dTTP/UTP pyrophosphatase (198 aa).

Aspartate 76 (proton acceptor) is an active-site residue.

The protein belongs to the Maf family. YhdE subfamily. It depends on a divalent metal cation as a cofactor.

It localises to the cytoplasm. It carries out the reaction dTTP + H2O = dTMP + diphosphate + H(+). It catalyses the reaction UTP + H2O = UMP + diphosphate + H(+). Functionally, nucleoside triphosphate pyrophosphatase that hydrolyzes dTTP and UTP. May have a dual role in cell division arrest and in preventing the incorporation of modified nucleotides into cellular nucleic acids. This chain is dTTP/UTP pyrophosphatase, found in Shewanella denitrificans (strain OS217 / ATCC BAA-1090 / DSM 15013).